Here is a 406-residue protein sequence, read N- to C-terminus: Proteasome-activating nucleotidase 1 (406 aa).

Acidic residues predominate over residues 1–12; sequence MTDTVEDVELPY. The segment at 1–20 is disordered; the sequence is MTDTVEDVELPYDDSASQQD. Positions 12–70 form a coiled coil; it reads YDDSASQQDKLEALEEQLSTLEEENEEMRDRLLDANAENNKYQQKLERLSHENKKLKQS. ATP-binding positions include 192 to 197 and histidine 331; that span reads GTGKTL. A disordered region spans residues 385-406; it reads AREKLDQDSEPAAATDVSRTFA. The segment at 404–406 is docks into pockets in the proteasome alpha-ring to cause gate opening; it reads TFA.

Belongs to the AAA ATPase family. As to quaternary structure, homohexamer. The hexameric complex has a two-ring architecture resembling a top hat that caps the 20S proteasome core at one or both ends. Upon ATP-binding, the C-terminus of PAN interacts with the alpha-rings of the proteasome core by binding to the intersubunit pockets.

It is found in the cytoplasm. Functionally, ATPase which is responsible for recognizing, binding, unfolding and translocation of substrate proteins into the archaeal 20S proteasome core particle. Is essential for opening the gate of the 20S proteasome via an interaction with its C-terminus, thereby allowing substrate entry and access to the site of proteolysis. Thus, the C-termini of the proteasomal ATPase function like a 'key in a lock' to induce gate opening and therefore regulate proteolysis. Unfolding activity requires energy from ATP hydrolysis, whereas ATP binding alone promotes ATPase-20S proteasome association which triggers gate opening, and supports translocation of unfolded substrates. This chain is Proteasome-activating nucleotidase 1, found in Halobacterium salinarum (strain ATCC 700922 / JCM 11081 / NRC-1) (Halobacterium halobium).